Here is a 1037-residue protein sequence, read N- to C-terminus: Tyrosine-protein kinase-like otk (1037 aa).

An N-terminal signal peptide occupies residues 1-23 (MDMDVMMISMCILASTFMAPGWA). 5 Ig-like C2-type domains span residues 24 to 109 (STSG…REAS), 110 to 199 (PPAK…RVMS), 251 to 365 (PEDL…APLN), 368 to 464 (PGLL…VSIN), and 469 to 559 (PKFS…VQLV). The Extracellular portion of the chain corresponds to 24–582 (STSGFLRVPQ…GGDGFLVTRA (559 aa)). 5 disulfide bridges follow: Cys47–Cys96, Cys138–Cys188, Cys276–Cys354, Cys399–Cys448, and Cys491–Cys543. 6 N-linked (GlcNAc...) asparagine glycosylation sites follow: Asn336, Asn418, Asn430, Asn445, Asn513, and Asn525. Residues 583–603 (VLITMTVALAYIVLVVGLMLW) form a helical membrane-spanning segment. Topologically, residues 604-1037 (CRYRRQARKA…SKAMQSVAEK (434 aa)) are cytoplasmic. Disordered regions lie at residues 623-683 (AGGD…KSVY) and 720-777 (SAQS…KEEE). Over residues 658 to 676 (KSNGDAQKSDDTACSQQSR) the composition is skewed to polar residues. Position 681 is a phosphoserine (Ser681). The 339-residue stretch at 693 to 1031 (LSELLQIGRG…QLGSALSKAM (339 aa)) folds into the Protein kinase; inactive domain. The span at 723 to 734 (SDKDADTEKQHS) shows a compositional bias: basic and acidic residues. Residues 739–749 (GSGGSGSGSGS) show a composition bias toward gly residues. Over residues 768–777 (DDIEEIKEEE) the composition is skewed to acidic residues.

It belongs to the protein kinase superfamily. Tyr protein kinase family. Insulin receptor subfamily. In terms of assembly, interacts with plexA; component of a receptor complex that mediates the repulsive signaling in response to Semaphorin ligands.

It localises to the cell membrane. In terms of biological role, acts as a calcium-dependent, homophilic cell adhesion molecule that regulates neural recognition during the development of the nervous system. Component of the repulsive Plexin signaling response to regulate motor axon guidance at the embryonic stage. Also component of a receptor complex that is required in the adult visual system to innervate the lamina layer; specific targeting of R1-R6 axons. This chain is Tyrosine-protein kinase-like otk, found in Drosophila pseudoobscura pseudoobscura (Fruit fly).